The primary structure comprises 64 residues: Large ribosomal subunit protein bL35 (64 aa).

The protein belongs to the bacterial ribosomal protein bL35 family.

This chain is Large ribosomal subunit protein bL35, found in Clavibacter michiganensis subsp. michiganensis (strain NCPPB 382).